The primary structure comprises 339 residues: Putative zinc metalloprotease FN1322 (339 aa).

Position 17 (His17) interacts with Zn(2+). Glu18 is an active-site residue. A Zn(2+)-binding site is contributed by His21. A run of 3 helical transmembrane segments spans residues 88–110 (FIVLFAGVFMNFLMAFILLFVTA), 262–284 (FGWISIASLCVVLSINIGVLNLL), and 318–335 (GMILLLFFILMISVNDVW). In terms of domain architecture, PDZ spans 96 to 179 (FMNFLMAFIL…ITALVERNGK (84 aa)).

It belongs to the peptidase M50B family. Zn(2+) is required as a cofactor.

Its subcellular location is the cell membrane. The polypeptide is Putative zinc metalloprotease FN1322 (Fusobacterium nucleatum subsp. nucleatum (strain ATCC 25586 / DSM 15643 / BCRC 10681 / CIP 101130 / JCM 8532 / KCTC 2640 / LMG 13131 / VPI 4355)).